Reading from the N-terminus, the 208-residue chain is Glutathione S-transferase (208 aa).

One can recognise a GST N-terminal domain in the interval Met1–Gly78. Residues Tyr7, Lys42, Gln49 to Leu50, and Gln62 to Ser63 contribute to the glutathione site. Positions Asn80 to Met200 constitute a GST C-terminal domain.

It belongs to the GST superfamily. Pi family. As to quaternary structure, homodimer.

It carries out the reaction RX + glutathione = an S-substituted glutathione + a halide anion + H(+). Functionally, conjugation of reduced glutathione to a wide number of exogenous and endogenous hydrophobic electrophiles. This is Glutathione S-transferase from Dirofilaria immitis (Canine heartworm).